A 157-amino-acid polypeptide reads, in one-letter code: Small ribosomal subunit protein uS7 (157 aa).

It belongs to the universal ribosomal protein uS7 family. As to quaternary structure, part of the 30S ribosomal subunit. Contacts proteins S9 and S11.

One of the primary rRNA binding proteins, it binds directly to 16S rRNA where it nucleates assembly of the head domain of the 30S subunit. Is located at the subunit interface close to the decoding center, probably blocks exit of the E-site tRNA. The chain is Small ribosomal subunit protein uS7 from Chlamydia trachomatis serovar L2 (strain ATCC VR-902B / DSM 19102 / 434/Bu).